A 196-amino-acid polypeptide reads, in one-letter code: Small ribosomal subunit protein uS4c (196 aa).

A disordered region spans residues 16–40 (GALPGLTRKTPKSGSNLKKKFHSGK). The region spanning 89-152 (MRLDNTLFRL…RSKDLVRNSI (64 aa)) is the S4 RNA-binding domain.

The protein belongs to the universal ribosomal protein uS4 family. Part of the 30S ribosomal subunit. Contacts protein S5. The interaction surface between S4 and S5 is involved in control of translational fidelity.

It localises to the plastid. The protein resides in the chloroplast. Functionally, one of the primary rRNA binding proteins, it binds directly to 16S rRNA where it nucleates assembly of the body of the 30S subunit. In terms of biological role, with S5 and S12 plays an important role in translational accuracy. This Anthoxanthum odoratum (Sweet vernal grass) protein is Small ribosomal subunit protein uS4c (rps4).